A 248-amino-acid chain; its full sequence is Phosphatidylserine decarboxylase proenzyme (248 aa).

Catalysis depends on S206, which acts as the Schiff-base intermediate with substrate; via pyruvic acid. S206 carries the post-translational modification Pyruvic acid (Ser); by autocatalysis.

This sequence belongs to the phosphatidylserine decarboxylase family. PSD-A subfamily. In terms of assembly, heterodimer of a large membrane-associated beta subunit and a small pyruvoyl-containing alpha subunit. It depends on pyruvate as a cofactor. Post-translationally, is synthesized initially as an inactive proenzyme. Formation of the active enzyme involves a self-maturation process in which the active site pyruvoyl group is generated from an internal serine residue via an autocatalytic post-translational modification. Two non-identical subunits are generated from the proenzyme in this reaction, and the pyruvate is formed at the N-terminus of the alpha chain, which is derived from the carboxyl end of the proenzyme. The post-translation cleavage follows an unusual pathway, termed non-hydrolytic serinolysis, in which the side chain hydroxyl group of the serine supplies its oxygen atom to form the C-terminus of the beta chain, while the remainder of the serine residue undergoes an oxidative deamination to produce ammonia and the pyruvoyl prosthetic group on the alpha chain.

The protein localises to the cell membrane. It carries out the reaction a 1,2-diacyl-sn-glycero-3-phospho-L-serine + H(+) = a 1,2-diacyl-sn-glycero-3-phosphoethanolamine + CO2. The protein operates within phospholipid metabolism; phosphatidylethanolamine biosynthesis; phosphatidylethanolamine from CDP-diacylglycerol: step 2/2. In terms of biological role, catalyzes the formation of phosphatidylethanolamine (PtdEtn) from phosphatidylserine (PtdSer). This is Phosphatidylserine decarboxylase proenzyme from Nitrobacter hamburgensis (strain DSM 10229 / NCIMB 13809 / X14).